Consider the following 55-residue polypeptide: uncharacterized protein (55 aa).

The stretch at 17–44 (QNVNIALTKKRLDTAQQNADQTLKMIQH) forms a coiled coil.

This is an uncharacterized protein from Bacillus subtilis (strain 168).